Consider the following 185-residue polypeptide: MAETAYVPRLRVEYDKSIRTKLTEQFGYVNVMEVPRLDKVVLNMGIGEAVNDRKKAETAAGDLSLIAGQKALVTYSRVAISTFKLRENQPIGCKVTLRKAKMYEFIDRLINVALPRVRDFRGLNPKSFDGGGNYSLGIKEHIIFPEIDFDKAGESWGMDVTVCTTAQTDDEARALLTAFNFPFRQ.

This sequence belongs to the universal ribosomal protein uL5 family. In terms of assembly, part of the 50S ribosomal subunit; part of the 5S rRNA/L5/L18/L25 subcomplex. Contacts the 5S rRNA and the P site tRNA. Forms a bridge to the 30S subunit in the 70S ribosome.

Functionally, this is one of the proteins that bind and probably mediate the attachment of the 5S RNA into the large ribosomal subunit, where it forms part of the central protuberance. In the 70S ribosome it contacts protein S13 of the 30S subunit (bridge B1b), connecting the 2 subunits; this bridge is implicated in subunit movement. Contacts the P site tRNA; the 5S rRNA and some of its associated proteins might help stabilize positioning of ribosome-bound tRNAs. The polypeptide is Large ribosomal subunit protein uL5 (Nitrobacter hamburgensis (strain DSM 10229 / NCIMB 13809 / X14)).